The sequence spans 607 residues: Chaperone protein DnaK (607 aa).

Phosphothreonine; by autocatalysis is present on Thr-174. The tract at residues 571-607 (AAMYQKQAQQQQPGPGPDAGKDKDDKDKTVDADYEVK) is disordered. Residues 589–607 (AGKDKDDKDKTVDADYEVK) are compositionally biased toward basic and acidic residues.

The protein belongs to the heat shock protein 70 family.

Acts as a chaperone. The sequence is that of Chaperone protein DnaK from Desulforudis audaxviator (strain MP104C).